Here is a 257-residue protein sequence, read N- to C-terminus: Acetylglutamate kinase (257 aa).

Residues 43 to 44 (GG), arginine 65, and asparagine 157 contribute to the substrate site.

The protein belongs to the acetylglutamate kinase family. ArgB subfamily.

It localises to the cytoplasm. The enzyme catalyses N-acetyl-L-glutamate + ATP = N-acetyl-L-glutamyl 5-phosphate + ADP. It participates in amino-acid biosynthesis; L-arginine biosynthesis; N(2)-acetyl-L-ornithine from L-glutamate: step 2/4. In terms of biological role, catalyzes the ATP-dependent phosphorylation of N-acetyl-L-glutamate. The sequence is that of Acetylglutamate kinase from Pasteurella multocida (strain Pm70).